Reading from the N-terminus, the 341-residue chain is Inositol-tetrakisphosphate 1-kinase 4 (341 aa).

The tract at residues 1 to 23 (MRLNGEISSGEEEEEEKQTGTTT) is disordered. Residues lysine 38 and lysine 80 each contribute to the 1D-myo-inositol 6-phosphate site. Positions 115 and 167 each coordinate ATP. Residues 125–335 (LNLSDCHGKV…LLSLVESKCS (211 aa)) form the ATP-grasp domain. Positions 173 and 178 each coordinate 1D-myo-inositol 6-phosphate. Positions 178, 199, and 202 each coordinate ATP. 1D-myo-inositol 6-phosphate is bound by residues lysine 210 and tyrosine 212. An ATP-binding site is contributed by serine 225. Residues 233–259 (ELSKVAGVFRFPRVSCAAASADDADLD) form a catalytic specificity elements (CSE) region. Asparagine 288 is a binding site for 1D-myo-inositol 6-phosphate. Residue aspartate 290 participates in Mg(2+) binding. The ATP site is built by isoleucine 304, aspartate 305, and asparagine 307. Residues aspartate 305 and asparagine 307 each coordinate Mg(2+). Positions 307, 311, and 314 each coordinate 1D-myo-inositol 6-phosphate.

This sequence belongs to the ITPK1 family. Monomer. The cofactor is Mg(2+). In terms of tissue distribution, expressed in seeds.

It catalyses the reaction 1D-myo-inositol 1,3,4-trisphosphate + ATP = 1D-myo-inositol 1,3,4,5-tetrakisphosphate + ADP + H(+). The catalysed reaction is 1D-myo-inositol 1,3,4-trisphosphate + ATP = 1D-myo-inositol 1,3,4,6-tetrakisphosphate + ADP + H(+). It carries out the reaction 1D-myo-inositol 3,4,5,6-tetrakisphosphate + ATP = 1D-myo-inositol 1,3,4,5,6-pentakisphosphate + ADP + H(+). The enzyme catalyses 1D-myo-inositol 3,4,6-trisphosphate + ATP = 1D-myo-inositol 1,3,4,6-tetrakisphosphate + ADP + H(+). In terms of biological role, kinase that can phosphorylate various inositol polyphosphate such as Ins(3,4,5,6)P4, Ins(3,4,6)P3 and Ins(1,3,4)P3. May participate in an inositol lipid-independent pathway of InsP6 synthesis. The sequence is that of Inositol-tetrakisphosphate 1-kinase 4 from Glycine max (Soybean).